A 1113-amino-acid polypeptide reads, in one-letter code: MPRPELPLPEGWEEARDFDGKVYYIDHTNRTTSWIDPRDRYTKPLTFADCISDELPLGWEEAYDPQVGDYFIDHNTKTTQIEDPRVQWRREQEHMLKDYLVVAQEALSAQKEIYQVKQQRLELAQQEYQQLHAVWEHKLGSQVSLVSGSSSSSKYDPEILKAEIATAKSRVNKLKREMVHLQHELQFKERGFQTLKKIDKKMSDAQGSYKLDEAQAVLRETKAIKKAITCGEKEKQDLIKSLAMLKDGFRTDRGSHSDLWSSSSSLESSSFPLPKQYLDVSSQTDISGSFGINSNNQLAEKVRLRLRYEEAKRRIANLKIQLAKLDSEAWPGVLDSERDRLILINEKEELLKEMRFISPRKWTQGEVEQLEMARKRLEKDLQAARDTQSKALTERLKLNSKRNQLVRELEEATRQVATLHSQLKSLSSSMQSLSSGSSPGSLTSSRGSLVASSLDSSTSASFTDLYYDPFEQLDSELQSKVEFLLLEGATGFRPSGCITTIHEDEVAKTQKAEGGGRLQALRSLSGTPKSMTSLSPRSSLSSPSPPCSPLMADPLLAGDAFLNSLEFEDPELSATLCELSLGNSAQERYRLEEPGTEGKQLGQAVNTAQGCGLKVACVSAAVSDESVAGDSGVYEASVQRLGASEAAAFDSDESEAVGATRIQIALKYDEKNKQFAILIIQLSNLSALLQQQDQKVNIRVAVLPCSESTTCLFRTRPLDASDTLVFNEVFWVSMSYPALHQKTLRVDVCTTDRSHLEECLGGAQISLAEVCRSGERSTRWYNLLSYKYLKKQSRELKPVGVMAPASGPASTDAVSALLEQTAVELEKRQEGRSSTQTLEDSWRYEETSENEAVAEEEEEEVEEEEGEEDVFTEKASPDMDGYPALKVDKETNTETPAPSPTVVRPKDRRVGTPSQGPFLRGSTIIRSKTFSPGPQSQYVCRLNRSDSDSSTLSKKPPFVRNSLERRSVRMKRPSSVKSLRSERLIRTSLDLELDLQATRTWHSQLTQEISVLKELKEQLEQAKSHGEKELPQWLREDERFRLLLRMLEKRQMDRAEHKGELQTDKMMRAAAKDVHRLRGQSCKEPPEVQSFREKMAFFTRPRMNIPALSADDV.

WW domains follow at residues Leu-6 to Asp-39 and Asp-53 to Val-86. Coiled coils occupy residues Leu-107 to Gln-193 and Asn-293 to Gln-431. Ser-141 is modified (phosphoserine). 2 disordered regions span residues Ser-429 to Ser-448 and Arg-522 to Cys-547. Residues Arg-522–Thr-532 show a composition bias toward polar residues. Residues Ser-533 to Ser-542 show a composition bias toward low complexity. Residue Ser-535 is modified to Phosphoserine. Ser-542 carries the phosphoserine; by CDK1 modification. The C2 domain occupies Gly-658 to Tyr-781. Positions Leu-825–Ser-975 are disordered. Positions Glu-839 to Val-1113 are interaction with histone H3. The span at Thr-847–Val-870 shows a compositional bias: acidic residues. The residue at position 899 (Ser-899) is a Phosphoserine. Thr-912 is subject to Phosphothreonine. Residues Ile-924–Tyr-938 show a composition bias toward polar residues. Residue Ser-927 is modified to Phosphoserine. Thr-929 carries the phosphothreonine modification. A Phosphoserine; by CDK1 modification is found at Ser-931. Ser-947 carries the post-translational modification Phosphoserine. Interaction with PRKCZ regions lie at residues Ser-953–Gln-996 and Pro-956–Ser-975. Ser-975 and Ser-978 each carry phosphoserine; by PKC/PRKCZ. Residues Trp-1001–Gln-1032 adopt a coiled-coil conformation. The short motif at Asp-1111–Val-1113 is the ADDV motif element.

The protein belongs to the WWC family. KIBRA subfamily. Homodimer. Forms heterodimers with WWC2 and WWC3. Interacts with DDN. Interacts with DYNLL1 and histone H3. The interaction with DYNLL1 is mandatory for the recruitment and transactivation functions of ESR1 or DYNLL1 to the target chromatin and the interaction with histone H3 ensures proper regulatory interaction of WWC1-DYNLL1-ESR1 complexes with target chromatin. Interacts (via WW domains) with DDR1 (via PPxY motif) in a collagen-regulated manner. Interacts with PRKCZ (via the protein kinase domain). Forms a tripartite complex with DDR1 and PRKCZ, but predominantly in the absence of collagen. Interacts (via the ADDV motif) with PATJ (via PDZ domain 8). Interacts (via WW domains) with SYNPO (via PPxY motifs). Interacts with NF2 and SNX4. Interacts with DLC1 and PRKCZ. Interacts (via WW domains) with LATS1 and LATS2. Post-translationally, phosphorylation at Ser-542 and Ser-931 by CDK1 in response to spindle damage stress regulates mitotic exit, these two sites are dephosphorylated by CDC14B. Expressed in mammary epithelial cells and breast cancer cell lines. Found in the luminal epithelium surrounding the ducts in the normal breast. In the brain, expressed in somatodendritic compartment of neurons in the cortex and hippocampus and in the cerebellum it is found in the Purkinje cells and some granule cells (at protein level). Detected in brain, heart, colon and kidney. In the kidney, expressed in glomerular podocytes, in some tubules and in the collecting duct.

The protein localises to the cytoplasm. The protein resides in the perinuclear region. It is found in the nucleus. Its subcellular location is the cell projection. It localises to the ruffle membrane. The protein localises to the cytosol. Regulator of the Hippo signaling pathway, also known as the Salvador-Warts-Hippo (SWH) pathway. Enhances phosphorylation of LATS1 and YAP1 and negatively regulates cell proliferation and organ growth due to a suppression of the transcriptional activity of YAP1, the major effector of the Hippo pathway. Along with NF2 can synergistically induce the phosphorylation of LATS1 and LATS2 and function in the regulation of Hippo signaling pathway. Acts as a transcriptional coactivator of ESR1 which plays an essential role in DYNLL1-mediated ESR1 transactivation. Regulates collagen-stimulated activation of the ERK/MAPK cascade. Modulates directional migration of podocytes. Plays a role in cognition and memory performance. Plays an important role in regulating AMPA-selective glutamate receptors (AMPARs) trafficking underlying synaptic plasticity and learning. In Homo sapiens (Human), this protein is Protein KIBRA.